The sequence spans 390 residues: Phosphoglycerate kinase (390 aa).

Substrate is bound by residues 21–23, Arg36, 59–62, Arg112, and Arg145; these read DLN and HLGR. ATP-binding positions include Lys196, Glu317, and 343-346; that span reads GGDT.

This sequence belongs to the phosphoglycerate kinase family. Monomer.

The protein localises to the cytoplasm. It catalyses the reaction (2R)-3-phosphoglycerate + ATP = (2R)-3-phospho-glyceroyl phosphate + ADP. It functions in the pathway carbohydrate degradation; glycolysis; pyruvate from D-glyceraldehyde 3-phosphate: step 2/5. This Cellvibrio japonicus (strain Ueda107) (Pseudomonas fluorescens subsp. cellulosa) protein is Phosphoglycerate kinase.